The sequence spans 207 residues: Large ribosomal subunit protein uL4 (207 aa).

Residues 49-78 form a disordered region; sequence HAVKNRSAVSGGGRKPWRQKGTGRARQGSI.

This sequence belongs to the universal ribosomal protein uL4 family. In terms of assembly, part of the 50S ribosomal subunit.

One of the primary rRNA binding proteins, this protein initially binds near the 5'-end of the 23S rRNA. It is important during the early stages of 50S assembly. It makes multiple contacts with different domains of the 23S rRNA in the assembled 50S subunit and ribosome. Functionally, forms part of the polypeptide exit tunnel. This chain is Large ribosomal subunit protein uL4, found in Streptococcus equi subsp. zooepidemicus (strain H70).